The primary structure comprises 331 residues: Geranylgeranyl pyrophosphate synthase dpmaD (331 aa).

Isopentenyl diphosphate-binding residues include lysine 53, arginine 56, and histidine 85. Mg(2+) is bound by residues aspartate 92 and aspartate 96. Arginine 101 is a dimethylallyl diphosphate binding site. Arginine 102 contributes to the isopentenyl diphosphate binding site. Positions 179, 180, and 213 each coordinate dimethylallyl diphosphate. Aspartate 216 is a Mg(2+) binding site. Positions 220, 230, and 240 each coordinate dimethylallyl diphosphate.

It belongs to the FPP/GGPP synthase family. Requires Mg(2+) as cofactor.

It carries out the reaction isopentenyl diphosphate + dimethylallyl diphosphate = (2E)-geranyl diphosphate + diphosphate. It catalyses the reaction isopentenyl diphosphate + (2E)-geranyl diphosphate = (2E,6E)-farnesyl diphosphate + diphosphate. The catalysed reaction is isopentenyl diphosphate + (2E,6E)-farnesyl diphosphate = (2E,6E,10E)-geranylgeranyl diphosphate + diphosphate. It functions in the pathway secondary metabolite biosynthesis; terpenoid biosynthesis. In terms of biological role, geranylgeranyl pyrophosphate synthase; part of the gene cluster that mediates the biosynthesis of the diterpenoid pyrones subglutinols A and B. The first step of the pathway is the synthesis of the alpha-pyrone moiety by the polyketide synthase dpmaA via condensation of one acetyl-CoA starter unit with 3 malonyl-CoA units and 2 methylations. The alpha-pyrone is then combined with geranylgeranyl pyrophosphate (GGPP) formed by the GGPP synthase dpmaD through the action of the prenyltransferase dpmaC to yield a linear alpha-pyrone diterpenoid. Subsequent steps in the diterpenoid pyrone biosynthetic pathway involve the decalin core formation, which is initiated by the epoxidation of the C10-C11 olefin by the FAD-dependent oxidoreductase dpmaE, and is followed by a cyclization cascade catalyzed by the terpene cyclase dpmaB. The dehydrogenase dpmaF is then involved in tetrahydrofuran (THF) ring formation at the C5 unit to complete the formation of subglutinols A and B. The protein is Geranylgeranyl pyrophosphate synthase dpmaD of Metarhizium anisopliae (Entomophthora anisopliae).